The primary structure comprises 236 residues: Eukaryotic translation initiation factor 3 subunit K (236 aa).

One can recognise a PCI domain in the interval 48-218; it reads CDCNANRTLL…EAKKAEIRED (171 aa).

Belongs to the eIF-3 subunit K family.

It localises to the cytoplasm. In terms of biological role, component of the eukaryotic translation initiation factor 3 (eIF-3) complex, which is involved in protein synthesis of a specialized repertoire of mRNAs and, together with other initiation factors, stimulates binding of mRNA and methionyl-tRNAi to the 40S ribosome. The eIF-3 complex specifically targets and initiates translation of a subset of mRNAs involved in cell proliferation. The polypeptide is Eukaryotic translation initiation factor 3 subunit K (Pyricularia oryzae (strain Y34) (Rice blast fungus)).